Here is a 659-residue protein sequence, read N- to C-terminus: Macrolide export ATP-binding/permease protein MacB (659 aa).

The ABC transporter domain maps to 10–249; it reads IELRGIRKRY…QPLLHHAGLS (240 aa). 47–54 serves as a coordination point for ATP; sequence GSSGSGKS. 4 helical membrane passes run 287 to 307, 538 to 558, 594 to 614, and 619 to 639; these read SLTL…LAIG, LGLV…NVML, ITGG…LVFW, and VFSF…GLIF.

The protein belongs to the ABC transporter superfamily. Macrolide exporter (TC 3.A.1.122) family. In terms of assembly, homodimer.

It localises to the cell inner membrane. Functionally, non-canonical ABC transporter that contains transmembrane domains (TMD), which form a pore in the inner membrane, and an ATP-binding domain (NBD), which is responsible for energy generation. Confers resistance against macrolides. The chain is Macrolide export ATP-binding/permease protein MacB from Nitrosomonas europaea (strain ATCC 19718 / CIP 103999 / KCTC 2705 / NBRC 14298).